The chain runs to 488 residues: MKPKLMYQELKVPVEEPAGELPMNEIEAWKAAEKKARWVLLVLILAVVGFGALMTQLFLWEYGDLHLFGPNQHPAPCYDPCEAVLVESIPEGLEFPNATTSNPSTSQAWLGLLAGAHSSLDIASFYWTLTNNDTHTQEPSAQQGEEVLQQLQALAPRGVKVRIAVSKPNGPLADLQSLLQSGAQVRMVDMQKLTHGVLHTKFWVVDQTHFYLGSANMDWRSLTQVKELGVVMYNCSCLARDLTKIFEAYWFLGQAGSSIPSTWPRPFDTRYNQETPMEICLNGTPALAYLASAPPPLCPGGRTPDLKALLSVVDNARSFIYIAVMNYLPTMEFSHPRRFWPAIDDGLRRAAYERGVKVRLLISCWGHSEPSMRSFLLSLAALRDNHTHSDIQVKLFVVPADEAQARIPYARVNHNKYMVTERTTYIGTSNWSGSYFTETAGTSLLVTQNGHGGLRSQLEAVFLRDWESPYSHNLDTSADSVGNACRLL.

Residues 1–38 (MKPKLMYQELKVPVEEPAGELPMNEIEAWKAAEKKARW) lie on the Cytoplasmic side of the membrane. A helical; Signal-anchor for type II membrane protein transmembrane segment spans residues 39 to 59 (VLLVLILAVVGFGALMTQLFL). Topologically, residues 60–488 (WEYGDLHLFG…DSVGNACRLL (429 aa)) are lumenal. Disulfide bonds link C77/C237 and C81/C235. Residues N97 and N132 are each glycosylated (N-linked (GlcNAc...) asparagine). The PLD phosphodiesterase 1 domain occupies 194–221 (THGVLHTKFWVVDQTHFYLGSANMDWRS). Active-site residues include H199, K201, and D206. Catalysis depends on H199, which acts as the Proton donor. H199 and K201 together coordinate phosphate. Position 216 (N216) interacts with phosphate. N-linked (GlcNAc...) asparagine glycans are attached at residues N234, N282, and N385. An intrachain disulfide couples C364 to C485. The PLD phosphodiesterase 2 domain maps to 409–435 (YARVNHNKYMVTERTTYIGTSNWSGSY). H414 serves as a coordination point for phosphate. H414 (nucleophile) is an active-site residue. Residue F436 participates in Mg(2+) binding.

It belongs to the phospholipase D family. Homodimer. Interacts with APP. Post-translationally, N-glycosylated. In terms of processing, proteolytically processed to a soluble form that is stable within endosomes and lysosomes. During transport through the secretory pathway becomes proteolysed by cysteine proteases, thereby releasing a stable soluble lysosomal lumenal polypeptide, whereas the transmembrane-bound fragment is rapidly degraded. Its transport route to lysosomes involves ubiquitination and the ESCRT complex. Ubiquitinated. Ubiquitination mediates sorting into lysosomes.

The protein resides in the endoplasmic reticulum membrane. The protein localises to the lysosome lumen. Its subcellular location is the early endosome membrane. It is found in the late endosome membrane. It localises to the golgi apparatus membrane. The protein resides in the endosome membrane. The enzyme catalyses Exonucleolytic cleavage in the 5'- to 3'-direction to yield nucleoside 3'-phosphates.. The catalysed reaction is a 5'-end 5'-dephospho-ribonucleotidyl-ribonucleotide-RNA + H2O = a ribonucleoside 3'-phosphate + a 5'-end dephospho-ribonucleoside-RNA + H(+). It catalyses the reaction a ribonucleoside 3'-phosphate-2'-3'-cyclophospho-GMP + H2O = a ribonucleoside 3'-phosphate + 2',3'-cyclophospho-GMP + H(+). It carries out the reaction a 5'-end 5'-dephospho-2'-deoxyribonucleotidyl-2'-deoxyribonucleotide in single-stranded DNA + H2O = a 5'-end dephospho-2'-deoxyribonucleoside in single-stranded DNA + a 2'-deoxyribonucleoside 3'-phosphate + H(+). The enzyme catalyses a 5'-end 5'-phospho-2'-deoxyribonucleotide in single-stranded DNA + H2O = a 5'-end 5'-dephospho-2'-deoxyribonucleotide in single-stranded DNA + phosphate. The catalysed reaction is a 3-lyso-sn-glycero-1-phospho-(3'-acyl-1'-sn-glycerol) + a 1-acyl-sn-glycerol = a 3-acyl-sn-glycero-1-phospho-(3'-acyl-1'-sn-glycerol) + glycerol. It catalyses the reaction 3-lyso-sn-glycero-1-phospho-(3'-(9Z-octadecenoyl)-1'-sn-glycerol) + 1-(9Z-octadecenoyl)-sn-glycerol = 3-(9Z-octadecenoyl)-sn-glycero-1-phospho-(3'-(9Z-octadecenoyl)-1'-sn-glycerol) + glycerol. 5'-&gt;3' exonuclease that hydrolyzes the phosphodiester bond of single-stranded DNA (ssDNA) and RNA molecules to form nucleoside 3'-monophosphates and 5'-end 5'-hydroxy deoxyribonucleotide/ribonucleotide fragments. Partially redundant with PLD4, can cleave all four nucleotides displaying higher efficiency for ssDNA and RNA fragments initiated with uridine and guanosine residues and lower efficiency for cytidine-initiated substrates. As a result, it does not always degrade polynucleotides to the single nucleotide level, it can stall at specific sites sparing certain fragments from exonucleolytic degradation. Processes self and pathogenic ssDNA and RNA molecules that reach the endolysosomal compartment via phagocytosis or autophagy and may serve as 'danger' signals for recognition by innate immune receptors such as toll-like receptors (TLRs). Degrades mitochondrial CpG-rich ssDNA fragments to prevent TLR9 activation and autoinflammatory response, but it can cleave viral RNA to generate ligands for TLR7 activation and initiate antiviral immune responses. In plasmacytoid dendritic cells, it cooperates with endonuclease RNASET2 to release 2',3'-cyclic guanosine monophosphate (2',3'-cGMP), a potent stimulatory ligand for TLR7. Produces 2',3'-cGMPs and cytidine-rich RNA fragments that occupy TLR7 ligand-binding pockets and trigger a signaling-competent state. Can exert polynucleotide phosphatase activity toward 5'-phosphorylated ssDNA substrates although at a slow rate. Transphosphatidylase that catalyzes the exchange with R to S stereo-inversion of the glycerol moiety between (S,R)-lysophosphatidylglycerol (LPG) and monoacylglycerol (MAG) substrates to yield (S,S)-bis(monoacylglycero)phosphate (BMP). Can synthesize a variety of (S,S)-BMPs representing the main phospholipid constituent of lysosomal intralumenal vesicle (ILV) membranes that bind acid hydrolases for lipid degradation. Regulates the homeostasis and interorganellar communication of the endolysosomal system with an overall impact on cellular removal of dysfunctional organelles via autophagy as well as proper protein and lipid turnover. May play a role in myotube formation in response to ER stress. In Rattus norvegicus (Rat), this protein is 5'-3' exonuclease PLD3 (Pld3).